Here is a 328-residue protein sequence, read N- to C-terminus: GTPase Obg 2 (328 aa).

One can recognise an Obg domain in the interval 1 to 139 (MSFRREKFIE…HCVLLKLKIV (139 aa)). The OBG-type G domain occupies 140-309 (SDVGIIGMPN…LHAQVKKAVV (170 aa)). GTP contacts are provided by residues 146 to 153 (GMPNAGKS), 171 to 175 (FTTLE), 192 to 195 (DIPG), 259 to 262 (NKCD), and 290 to 292 (GDE). Mg(2+) is bound by residues serine 153 and threonine 173.

It belongs to the TRAFAC class OBG-HflX-like GTPase superfamily. OBG GTPase family. Monomer. The cofactor is Mg(2+).

The protein resides in the cytoplasm. In terms of biological role, an essential GTPase which binds GTP, GDP and possibly (p)ppGpp with moderate affinity, with high nucleotide exchange rates and a fairly low GTP hydrolysis rate. Plays a role in control of the cell cycle, stress response, ribosome biogenesis and in those bacteria that undergo differentiation, in morphogenesis control. This Anaplasma marginale (strain Florida) protein is GTPase Obg 2.